Consider the following 316-residue polypeptide: CXXC-type zinc finger protein 5 (316 aa).

Gly residues predominate over residues 1–10 (MSSLGGGSQD). A disordered region spans residues 1-95 (MSSLGGGSQD…SGGAGSMMGG (95 aa)). Composition is skewed to low complexity over residues 11–27 (AGGSSSSSNTSSSSGSG) and 36–50 (SATVAATAPASVADD). The CXXC-type zinc finger occupies 250–291 (GKKKRKRCGMCAPCRRRINCEQCSSCRNRKTGHQICKFRKCE). The Nuclear localization signal motif lies at 251–256 (KKKRKR). Cys257, Cys260, Cys263, Cys269, Cys272, Cys275, Cys285, and Cys290 together coordinate Zn(2+).

In terms of assembly, interacts with DVL1. Interacts with RBPJ. In terms of tissue distribution, expressed in neural stem cells (at protein level). Expressed in the dorsal telencephalon.

The protein localises to the nucleus. The protein resides in the cytoplasm. In terms of biological role, may indirectly participate in activation of the NF-kappa-B and MAPK pathways. Required for DNA damage-induced ATM phosphorylation, p53 activation and cell cycle arrest. Involved in myelopoiesis. Acts as a mediator of BMP4-mediated modulation of canonical Wnt signaling activity in neural stem cells. Binds to the oxygen responsive element of COX4I2 and represses its transcription under hypoxia conditions (4% oxygen), as well as normoxia conditions (20% oxygen). May repress COX4I2 transactivation induced by CHCHD2 and RBPJ. Binds preferentially to DNA containing cytidine-phosphate-guanosine (CpG) dinucleotides over CpH (H=A, T, and C), hemimethylated-CpG and hemimethylated-hydroxymethyl-CpG. This chain is CXXC-type zinc finger protein 5 (Cxxc5), found in Rattus norvegicus (Rat).